A 214-amino-acid chain; its full sequence is Calcineurin B-like protein 8 (214 aa).

4 consecutive EF-hand domains span residues 35–70 (EIEA…RNGS), 71–106 (MQNL…FHPY), 108–143 (PEHE…LLGE), and 152–187 (SIEA…NPSI). Asp165, Asn167, Asp169, Lys171, and Glu176 together coordinate Ca(2+). Ser205 carries the phosphoserine modification.

The protein belongs to the calcineurin regulatory subunit family. In terms of assembly, interacts with CIPK23. Interacts with CIPK14 at the cell membrane exclusively.

The protein localises to the cytoplasm. It is found in the nucleus. The protein resides in the cell membrane. Acts as a calcium sensor. CBL proteins interact with CIPK serine-threonine protein kinases. Binding of a CBL protein to the regulatory NAF domain of a CIPK protein lead to the activation of the kinase in a calcium-dependent manner. The sequence is that of Calcineurin B-like protein 8 (CBL8) from Arabidopsis thaliana (Mouse-ear cress).